The chain runs to 305 residues: Probable lipid kinase YegS-like (305 aa).

The DAGKc domain occupies 1-129 (MTQRRAMLIL…VDLGEVGGKL (129 aa)). ATP-binding positions include Thr39, 65–71 (GDGTLRD), and Thr92. Residues Leu210, Asp213, and Leu215 each contribute to the Mg(2+) site. Glu268 (proton acceptor) is an active-site residue.

This sequence belongs to the diacylglycerol/lipid kinase family. YegS lipid kinase subfamily. Requires Mg(2+) as cofactor. Ca(2+) serves as cofactor.

Its subcellular location is the cytoplasm. In terms of biological role, probably phosphorylates lipids; the in vivo substrate is unknown. This is Probable lipid kinase YegS-like from Pseudomonas savastanoi pv. phaseolicola (strain 1448A / Race 6) (Pseudomonas syringae pv. phaseolicola (strain 1448A / Race 6)).